Consider the following 240-residue polypeptide: MKFLTPLVLSSLASAAALNRRADMCGQWDTTTTDKFTLYNNLWGEGNADSGSQCTGLDSDDGNTIAWHTSWTWTGGAGQVKSFANVAYNFEATQLSQLSSIPSTWKWENTGSDIVADVAYDLFTSSSADGDEEYEIMIWLAALGGAGPISSTGSAIATPTVGGQSWSLYSGPNGQMTVFSFVASSTTEDFSADLNDFLKYLQEEQGMPSSQYLTHVQAGTEPFSGSNVKFTTSSYSVSVA.

The N-terminal stretch at 1–15 (MKFLTPLVLSSLASA) is a signal peptide.

Belongs to the glycosyl hydrolase 12 (cellulase H) family.

It localises to the secreted. The catalysed reaction is xyloglucan + H2O = xyloglucan oligosaccharides.. Catalyzes endohydrolysis of 1,4-beta-D-glucosidic linkages in xyloglucan with retention of the beta-configuration of the glycosyl residues. Specific for xyloglucan and does not hydrolyze other cell wall components. This chain is Probable xyloglucan-specific endo-beta-1,4-glucanase A (xgeA), found in Aspergillus oryzae (strain ATCC 42149 / RIB 40) (Yellow koji mold).